The sequence spans 195 residues: Imidazoleglycerol-phosphate dehydratase (195 aa).

The protein belongs to the imidazoleglycerol-phosphate dehydratase family.

It localises to the cytoplasm. It carries out the reaction D-erythro-1-(imidazol-4-yl)glycerol 3-phosphate = 3-(imidazol-4-yl)-2-oxopropyl phosphate + H2O. Its pathway is amino-acid biosynthesis; L-histidine biosynthesis; L-histidine from 5-phospho-alpha-D-ribose 1-diphosphate: step 6/9. This is Imidazoleglycerol-phosphate dehydratase from Thiobacillus denitrificans (strain ATCC 25259 / T1).